Consider the following 269-residue polypeptide: Eukaryotic translation initiation factor 3 subunit G-1 (269 aa).

The RRM domain occupies 188 to 266; it reads AAIRISNLSE…LILSVEWSKP (79 aa).

It belongs to the eIF-3 subunit G family. In terms of assembly, component of the eukaryotic translation initiation factor 3 (eIF-3) complex. The eIF-3 complex interacts with pix.

The protein localises to the cytoplasm. Its function is as follows. RNA-binding component of the eukaryotic translation initiation factor 3 (eIF-3) complex, which is involved in protein synthesis of a specialized repertoire of mRNAs and, together with other initiation factors, stimulates binding of mRNA and methionyl-tRNAi to the 40S ribosome. The eIF-3 complex specifically targets and initiates translation of a subset of mRNAs involved in cell proliferation. This subunit can bind 18S rRNA. This Drosophila mojavensis (Fruit fly) protein is Eukaryotic translation initiation factor 3 subunit G-1.